Reading from the N-terminus, the 192-residue chain is Large ribosomal subunit protein uL5 (192 aa).

The protein belongs to the universal ribosomal protein uL5 family. Part of the 50S ribosomal subunit; contacts the 5S rRNA and probably tRNA. Forms a bridge to the 30S subunit in the 70S ribosome.

Functionally, this is one of the proteins that bind and probably mediate the attachment of the 5S RNA into the large ribosomal subunit, where it forms part of the central protuberance. In the 70S ribosome it contacts protein S13 of the 30S subunit (bridge B1b), connecting the 2 subunits; this bridge is implicated in subunit movement. May contact the P site tRNA; the 5S rRNA and some of its associated proteins might help stabilize positioning of ribosome-bound tRNAs. This Aeropyrum pernix (strain ATCC 700893 / DSM 11879 / JCM 9820 / NBRC 100138 / K1) protein is Large ribosomal subunit protein uL5.